The chain runs to 212 residues: Large ribosomal subunit protein uL3 (212 aa).

The segment at 130–158 (KRGSMTHGSKNHRLPGSTGAGTTPGRVYP) is disordered.

Belongs to the universal ribosomal protein uL3 family. In terms of assembly, part of the 50S ribosomal subunit. Forms a cluster with proteins L14 and L19.

Its function is as follows. One of the primary rRNA binding proteins, it binds directly near the 3'-end of the 23S rRNA, where it nucleates assembly of the 50S subunit. The polypeptide is Large ribosomal subunit protein uL3 (Gloeothece citriformis (strain PCC 7424) (Cyanothece sp. (strain PCC 7424))).